Here is a 934-residue protein sequence, read N- to C-terminus: 3-hydroxy-3-methylglutaryl-coenzyme A reductase (934 aa).

At 1 to 111 (MFYHGASANQ…VLNLVRGAET (111 aa)) the chain is on the lumenal side. The helical transmembrane segment at 112–132 (FDIALVTCAYIAMFYTLFNLF) threads the bilayer. In terms of domain architecture, SSD spans 113–280 (DIALVTCAYI…STFLSAILSL (168 aa)). Over 133 to 141 (ARMRAVGSK) the chain is Cytoplasmic. The helical transmembrane segment at 142 to 162 (VWLGLSTLVSSFFAFLFALYI) threads the bilayer. Residues 163-168 (TTRVLD) are Lumenal-facing. The chain crosses the membrane as a helical span at residues 169 to 189 (LSIPFLSLSEGIPFFVAVVGF). The Cytoplasmic segment spans residues 190 to 231 (NNKILLAEKVLQNQLNAQSSKNDAPTVLYQALREQGPLLLRD). Residues 232–252 (HLFMITAFLGCSFYASYLDGL) form a helical membrane-spanning segment. Topologically, residues 253–256 (KNFC) are lumenal. The helical transmembrane segment at 257–277 (ILAALILAFDILTTSTFLSAI) threads the bilayer. Topologically, residues 278-334 (LSLKLEINQIHRSTLLREQLEDDGLTETTVDDVLKSNSLAGTKTFTDAPSTLVTVAK) are cytoplasmic. A helical membrane pass occupies residues 335-355 (VAGVSVFFGLHFYGFGSAWLS). Residues 356–421 (DLSAGNETND…GLISTAARDK (66 aa)) are Lumenal-facing. 3 N-linked (GlcNAc...) asparagine glycosylation sites follow: N361, N364, and N382. A helical transmembrane segment spans residues 422-442 (YISKFILFAFAVSASINVYLL). Over 443–934 (NVARIHTTRL…MQHNRAAAKK (492 aa)) the chain is Cytoplasmic. E618 acts as the Charge relay system in catalysis. 624-630 (SAMRGCK) lines the CoA pocket. NADP(+) contacts are provided by residues 685–687 (SRF) and 712–720 (DAMGMNMIS). K752 (charge relay system) is an active-site residue. Residue 781–783 (VLK) participates in CoA binding. Catalysis depends on D828, which acts as the Charge relay system. 923-924 (SH) is a binding site for CoA. H924 (proton donor) is an active-site residue. Position 928–929 (928–929 (NR)) interacts with NADP(+).

The protein belongs to the HMG-CoA reductase family.

The protein localises to the endoplasmic reticulum membrane. The catalysed reaction is (R)-mevalonate + 2 NADP(+) + CoA = (3S)-3-hydroxy-3-methylglutaryl-CoA + 2 NADPH + 2 H(+). It participates in metabolic intermediate biosynthesis; (R)-mevalonate biosynthesis; (R)-mevalonate from acetyl-CoA: step 3/3. Its function is as follows. HMG-CoA reductase; part of the first module of ergosterol biosynthesis pathway that includes the early steps of the pathway, conserved across all eukaryotes, and which results in the formation of mevalonate from acetyl-coenzyme A (acetyl-CoA). In this module, the cytosolic acetyl-CoA acetyltransferase catalyzes the formation of acetoacetyl-CoA. The hydroxymethylglutaryl-CoA synthase then condenses acetyl-CoA with acetoacetyl-CoA to form HMG-CoA. The rate-limiting step of the early module is the reduction to mevalonate by the 3-hydroxy-3-methylglutaryl-coenzyme A (HMG-CoA) reductase. This is 3-hydroxy-3-methylglutaryl-coenzyme A reductase from Cyberlindnera jadinii (Torula yeast).